The primary structure comprises 394 residues: Argininosuccinate synthase (394 aa).

8–16 is an ATP binding site; it reads AYSGGLDTS. L-citrulline is bound by residues Tyr-86 and Ser-91. Gly-116 provides a ligand contact to ATP. Thr-118, Asn-122, and Asp-123 together coordinate L-aspartate. Residue Asn-122 coordinates L-citrulline. Residues Arg-126, Ser-172, Ser-181, Glu-257, and Tyr-269 each coordinate L-citrulline.

Belongs to the argininosuccinate synthase family. Type 1 subfamily. Homotetramer.

The protein localises to the cytoplasm. The catalysed reaction is L-citrulline + L-aspartate + ATP = 2-(N(omega)-L-arginino)succinate + AMP + diphosphate + H(+). Its pathway is amino-acid biosynthesis; L-arginine biosynthesis; L-arginine from L-ornithine and carbamoyl phosphate: step 2/3. In Methanosarcina mazei (strain ATCC BAA-159 / DSM 3647 / Goe1 / Go1 / JCM 11833 / OCM 88) (Methanosarcina frisia), this protein is Argininosuccinate synthase.